Reading from the N-terminus, the 120-residue chain is UPF0231 protein YacL (120 aa).

Belongs to the UPF0231 family.

This Escherichia coli O6:K15:H31 (strain 536 / UPEC) protein is UPF0231 protein YacL.